Reading from the N-terminus, the 213-residue chain is Cytokinin riboside 5'-monophosphate phosphoribohydrolase LOG1 (213 aa).

Substrate contacts are provided by residues Glu78, 96 to 97 (RK), 113 to 119 (GYGTLEE), and Thr125.

Belongs to the LOG family. Expressed in roots and shoots. Detected in the vascular tissues of roots, cotyledons, leaves and pistils, in the shoot apical meristem and in immature flowers.

The protein resides in the cytoplasm. It is found in the nucleus. The enzyme catalyses N(6)-(dimethylallyl)adenosine 5'-phosphate + H2O = N(6)-dimethylallyladenine + D-ribose 5-phosphate. It carries out the reaction 9-ribosyl-trans-zeatin 5'-phosphate + H2O = trans-zeatin + D-ribose 5-phosphate. Functionally, cytokinin-activating enzyme working in the direct activation pathway. Phosphoribohydrolase that converts inactive cytokinin nucleotides to the biologically active free-base forms. This is Cytokinin riboside 5'-monophosphate phosphoribohydrolase LOG1 (LOG1) from Arabidopsis thaliana (Mouse-ear cress).